The sequence spans 173 residues: MTTIRRFVCDDLFKFNNINLDYLTETYYLPFYLQYLSKWPSLLSMAEDVNGKPMGYMIGKAEGEGINWHGHVTAVSVAPEFRRIGLADRLMHILEEGSEKIYDGYFVDLFVRKSNTLAINMYTKFGYSVYRTVIGYYSGDEDALDMRKALPRDVEKKSIIPLKHPVYPTDADL.

The region spanning 2–151 (TTIRRFVCDD…DALDMRKALP (150 aa)) is the N-acetyltransferase domain.

This sequence belongs to the acetyltransferase family. ARD1 subfamily.

Its function is as follows. Seems to be involved in N-acetylation. This Dictyostelium discoideum (Social amoeba) protein is N-alpha-acetyltransferase 20 (nat5).